The chain runs to 913 residues: Protein translocase subunit SecA (913 aa).

ATP-binding positions include Gln-87, 105-109, and Asp-512; that span reads GEGKT. Zn(2+)-binding residues include Cys-897, Cys-899, Cys-908, and His-909.

This sequence belongs to the SecA family. As to quaternary structure, monomer and homodimer. Part of the essential Sec protein translocation apparatus which comprises SecA, SecYEG and auxiliary proteins SecDF-YajC and YidC. The cofactor is Zn(2+).

Its subcellular location is the cell inner membrane. The protein resides in the cytoplasm. It carries out the reaction ATP + H2O + cellular proteinSide 1 = ADP + phosphate + cellular proteinSide 2.. Functionally, part of the Sec protein translocase complex. Interacts with the SecYEG preprotein conducting channel. Has a central role in coupling the hydrolysis of ATP to the transfer of proteins into and across the cell membrane, serving both as a receptor for the preprotein-SecB complex and as an ATP-driven molecular motor driving the stepwise translocation of polypeptide chains across the membrane. The sequence is that of Protein translocase subunit SecA from Pseudomonas fluorescens (strain ATCC BAA-477 / NRRL B-23932 / Pf-5).